A 151-amino-acid chain; its full sequence is Ribosomal RNA large subunit methyltransferase H (151 aa).

Residues Leu73, Gly100, and 119 to 124 (LSKMTM) each bind S-adenosyl-L-methionine.

This sequence belongs to the RNA methyltransferase RlmH family. Homodimer.

It localises to the cytoplasm. It catalyses the reaction pseudouridine(1915) in 23S rRNA + S-adenosyl-L-methionine = N(3)-methylpseudouridine(1915) in 23S rRNA + S-adenosyl-L-homocysteine + H(+). Its function is as follows. Specifically methylates the pseudouridine at position 1915 (m3Psi1915) in 23S rRNA. This chain is Ribosomal RNA large subunit methyltransferase H, found in Campylobacter concisus (strain 13826).